An 887-amino-acid polypeptide reads, in one-letter code: Exocyst complex component SEC3A (887 aa).

Coiled-coil stretches lie at residues 221–248 (IGEA…AILE) and 281–301 (LRHM…LEMQ). The interval 542–581 (GAGNDKKSQSNNDDGNDDDDLGIMDIDETDKKPGKNSPDL) is disordered. Residues 555–569 (DGNDDDDLGIMDIDE) show a composition bias toward acidic residues.

This sequence belongs to the SEC3 family. As to quaternary structure, the exocyst complex is composed of SEC3, SEC5, SEC6, SEC8, SEC10, EXO70A1 and EXO84B. Interacts with EXO70A1, SEC5A and ICR1, but not with ICR2. Binds to EXO70H1. Binds directly to B1L. Widely expressed. Preferentially expressed in tissues containing dividing and expanding cells, such as the shoot apical meristem, root tip, lateral root primordia and developing embryos.

The protein resides in the cytoplasm. Its subcellular location is the cytosol. The protein localises to the cell membrane. It localises to the cytoskeleton. It is found in the phragmoplast. The protein resides in the secreted. Its subcellular location is the extracellular exosome. In terms of biological role, component of the exocyst complex involved in the docking of exocytic vesicles with fusion sites on the plasma membrane during regulated or polarized secretion. Involved in polarized cell growth and organ morphogenesis. During cytokinesis, involved in cell plate initiation, cell plate maturation and formation of new primary cell wall. During cytokinesis, involved in cell plate initiation, cell plate maturation and formation of new primary cell wall. This Arabidopsis thaliana (Mouse-ear cress) protein is Exocyst complex component SEC3A.